A 126-amino-acid chain; its full sequence is Histone H2B type 1-L (126 aa).

Over residues 1 to 12 (MPELAKSAPAPK) the composition is skewed to low complexity. Residues 1-36 (MPELAKSAPAPKKGSKKAVTKAQKKDGKKRKRSRKE) are disordered. Proline 2 carries the post-translational modification N-acetylproline. At glutamate 3 the chain carries ADP-ribosyl glutamic acid. Residue lysine 6 is modified to N6-(2-hydroxyisobutyryl)lysine; alternate. Lysine 6 is modified (N6-(beta-hydroxybutyryl)lysine; alternate). Lysine 6 carries the N6-acetyllysine; alternate modification. Lysine 6 is modified (N6-butyryllysine; alternate). N6-crotonyllysine; alternate is present on lysine 6. Lysine 6 is subject to N6-lactoyllysine; alternate. Lysine 6 is covalently cross-linked (Glycyl lysine isopeptide (Lys-Gly) (interchain with G-Cter in SUMO2); alternate). Serine 7 carries the post-translational modification ADP-ribosylserine. Position 12 is an N6-(beta-hydroxybutyryl)lysine; alternate (lysine 12). Lysine 12 and lysine 13 each carry N6-acetyllysine; alternate. Lysine 12 and lysine 13 each carry N6-crotonyllysine; alternate. Residue lysine 12 is modified to N6-lactoyllysine; alternate. The residue at position 13 (lysine 13) is an N6-(2-hydroxyisobutyryl)lysine; alternate. Serine 15 is subject to Phosphoserine; by STK4/MST1. An N6-acetyllysine; alternate mark is found at lysine 16, lysine 17, lysine 21, and lysine 24. N6-crotonyllysine; alternate is present on residues lysine 16, lysine 17, lysine 21, and lysine 24. N6-lactoyllysine; alternate occurs at positions 16, 17, 21, and 24. Lysine 17 and lysine 21 each carry N6-(beta-hydroxybutyryl)lysine; alternate. Lysine 17 is subject to N6-glutaryllysine; alternate. N6-(2-hydroxyisobutyryl)lysine; alternate occurs at positions 21 and 24. Position 21 is an N6-butyryllysine; alternate (lysine 21). A Glycyl lysine isopeptide (Lys-Gly) (interchain with G-Cter in SUMO2); alternate cross-link involves residue lysine 21. Lysine 25 is subject to N6-(2-hydroxyisobutyryl)lysine. Lysine 35 carries the N6-(2-hydroxyisobutyryl)lysine; alternate modification. Lysine 35 is modified (N6-(beta-hydroxybutyryl)lysine; alternate). Position 35 is an N6-crotonyllysine; alternate (lysine 35). Residue lysine 35 is modified to N6-glutaryllysine; alternate. An N6-succinyllysine; alternate modification is found at lysine 35. Residue lysine 35 forms a Glycyl lysine isopeptide (Lys-Gly) (interchain with G-Cter in ubiquitin); alternate linkage. Glutamate 36 carries the post-translational modification PolyADP-ribosyl glutamic acid. The residue at position 37 (serine 37) is a Phosphoserine; by AMPK. Lysine 44, lysine 47, and lysine 58 each carry N6-(2-hydroxyisobutyryl)lysine; alternate. The residue at position 44 (lysine 44) is an N6-lactoyllysine; alternate. N6-glutaryllysine; alternate occurs at positions 44 and 47. Lysine 47 is modified (N6-methyllysine; alternate). Lysine 58 bears the N6,N6-dimethyllysine; alternate mark. At arginine 80 the chain carries Dimethylated arginine. Lysine 86 carries the post-translational modification N6-(2-hydroxyisobutyryl)lysine; alternate. Residue lysine 86 is modified to N6-(beta-hydroxybutyryl)lysine; alternate. Residue lysine 86 is modified to N6-acetyllysine; alternate. Lysine 86 is modified (N6-lactoyllysine; alternate). Lysine 86 carries the post-translational modification N6,N6,N6-trimethyllysine; alternate. Omega-N-methylarginine is present on residues arginine 87 and arginine 93. An N6-(2-hydroxyisobutyryl)lysine; alternate modification is found at lysine 109. At lysine 109 the chain carries N6-lactoyllysine; alternate. Lysine 109 bears the N6-glutaryllysine; alternate mark. Residue lysine 109 is modified to N6-methyllysine; alternate. An O-linked (GlcNAc) serine glycan is attached at serine 113. Threonine 116 bears the Phosphothreonine mark. N6-(2-hydroxyisobutyryl)lysine; alternate is present on residues lysine 117 and lysine 121. N6-(beta-hydroxybutyryl)lysine; alternate is present on residues lysine 117 and lysine 121. Residues lysine 117 and lysine 121 each carry the N6-lactoyllysine; alternate modification. An N6-glutaryllysine; alternate mark is found at lysine 117 and lysine 121. Lysine 117 and lysine 121 each carry N6-succinyllysine; alternate. Position 117 is an N6-malonyllysine; alternate (lysine 117). Residue lysine 117 is modified to N6-methylated lysine; alternate. A Glycyl lysine isopeptide (Lys-Gly) (interchain with G-Cter in ubiquitin); alternate cross-link involves residue lysine 121.

It belongs to the histone H2B family. The nucleosome is a histone octamer containing two molecules each of H2A, H2B, H3 and H4 assembled in one H3-H4 heterotetramer and two H2A-H2B heterodimers. The octamer wraps approximately 147 bp of DNA. Post-translationally, monoubiquitination at Lys-35 (H2BK34Ub) by the MSL1/MSL2 dimer is required for histone H3 'Lys-4' (H3K4me) and 'Lys-79' (H3K79me) methylation and transcription activation at specific gene loci, such as HOXA9 and MEIS1 loci. Similarly, monoubiquitination at Lys-121 (H2BK120Ub) by the RNF20/40 complex gives a specific tag for epigenetic transcriptional activation and is also prerequisite for histone H3 'Lys-4' and 'Lys-79' methylation. It also functions cooperatively with the FACT dimer to stimulate elongation by RNA polymerase II. H2BK120Ub also acts as a regulator of mRNA splicing: deubiquitination by USP49 is required for efficient cotranscriptional splicing of a large set of exons. In terms of processing, phosphorylation at Ser-37 (H2BS36ph) by AMPK in response to stress promotes transcription. Phosphorylated on Ser-15 (H2BS14ph) by STK4/MST1 during apoptosis; which facilitates apoptotic chromatin condensation. Also phosphorylated on Ser-15 in response to DNA double strand breaks (DSBs), and in correlation with somatic hypermutation and immunoglobulin class-switch recombination. GlcNAcylation at Ser-113 promotes monoubiquitination of Lys-121. It fluctuates in response to extracellular glucose, and associates with transcribed genes. Post-translationally, ADP-ribosylated by PARP1 or PARP2 on Ser-7 (H2BS6ADPr) in response to DNA damage. H2BS6ADPr promotes recruitment of CHD1L. Mono-ADP-ribosylated on Glu-3 (H2BE2ADPr) by PARP3 in response to single-strand breaks. Poly ADP-ribosylation on Glu-36 (H2BE35ADPr) by PARP1 regulates adipogenesis: it inhibits phosphorylation at Ser-37 (H2BS36ph), thereby blocking expression of pro-adipogenetic genes. In terms of processing, crotonylation (Kcr) is specifically present in male germ cells and marks testis-specific genes in post-meiotic cells, including X-linked genes that escape sex chromosome inactivation in haploid cells. Crotonylation marks active promoters and enhancers and confers resistance to transcriptional repressors. It is also associated with post-meiotically activated genes on autosomes. Lactylated in macrophages by EP300/P300 by using lactoyl-CoA directly derived from endogenous or exogenous lactate, leading to stimulates gene transcription.

It is found in the nucleus. Its subcellular location is the chromosome. Core component of nucleosome. Nucleosomes wrap and compact DNA into chromatin, limiting DNA accessibility to the cellular machineries which require DNA as a template. Histones thereby play a central role in transcription regulation, DNA repair, DNA replication and chromosomal stability. DNA accessibility is regulated via a complex set of post-translational modifications of histones, also called histone code, and nucleosome remodeling. This chain is Histone H2B type 1-L, found in Homo sapiens (Human).